A 147-amino-acid chain; its full sequence is Large ribosomal subunit protein uL15 (147 aa).

The segment at 1 to 57 is disordered; that stretch reads MRLEDLRPTPGSMKKRKRVGRGPGSGHGKTSGRGHKGQKARGTGKVHPWFEGGQTPL. A compositionally biased stretch (basic residues) spans 30-44; the sequence is TSGRGHKGQKARGTG.

It belongs to the universal ribosomal protein uL15 family. As to quaternary structure, part of the 50S ribosomal subunit.

Functionally, binds to the 23S rRNA. The chain is Large ribosomal subunit protein uL15 from Thermotoga neapolitana (strain ATCC 49049 / DSM 4359 / NBRC 107923 / NS-E).